Consider the following 308-residue polypeptide: Olfactory receptor 2T6 (308 aa).

The Extracellular portion of the chain corresponds to 1 to 28; that stretch reads MNENNETLTRGFTLMGLFTHNKCSGFFF. Asn-5 is a glycosylation site (N-linked (GlcNAc...) asparagine). A helical transmembrane segment spans residues 29-49; it reads GVICAVFFMAMIANGVMIFLI. The Cytoplasmic segment spans residues 50 to 57; that stretch reads NIDPHLHT. Residues 58–78 form a helical membrane-spanning segment; sequence PMYFLLSHLSVIDTLYISTIV. Residues 79-98 lie on the Extracellular side of the membrane; that stretch reads PKMLVDYLMGEGTISFIACT. Residues Cys-97 and Cys-179 are joined by a disulfide bond. The chain crosses the membrane as a helical span at residues 99–119; it reads AQCFLYMGFMGAEFFLLGLMA. The Cytoplasmic segment spans residues 120 to 145; sequence YDRYVAICNPLRYPVLISWRVCWMIL. A helical membrane pass occupies residues 146-166; the sequence is ASSWFGGALDSFLLTPITMSL. Residues 167 to 203 lie on the Extracellular side of the membrane; the sequence is PFCASHQINHFFCEAPTMLRLACGDKTTYETVMYVCC. A helical transmembrane segment spans residues 204-224; that stretch reads VAMLLIPFSVVTASYTRILIT. The Cytoplasmic portion of the chain corresponds to 225-236; sequence VHQMTSAEGRKK. A helical transmembrane segment spans residues 237–257; sequence AFATCSSHMMVVTLFYGAALY. The Extracellular portion of the chain corresponds to 258-271; it reads TYTLPQSYHTPIKD. The chain crosses the membrane as a helical span at residues 272-292; the sequence is KVFSAFYTILTPLLNPLIYSL. Residues 293–308 lie on the Cytoplasmic side of the membrane; the sequence is RNRDVMGALKRVVARC.

The protein belongs to the G-protein coupled receptor 1 family.

It is found in the cell membrane. Functionally, odorant receptor. The polypeptide is Olfactory receptor 2T6 (OR2T6) (Homo sapiens (Human)).